Consider the following 171-residue polypeptide: SWR1 complex subunit 6 (171 aa).

Positions 63–87 (DEDDDLGYLQKKQHKGSKRKTRQAK) are disordered. Positions 73–85 (KKQHKGSKRKTRQ) are enriched in basic residues. Residues C134, C137, C145, C148, C153, C157, H161, and C166 each contribute to the Zn(2+) site. Residues 134-166 (CSVCGYIAGYNCCLCGMRFCSIRCQNIHKDTRC) form an HIT-type zinc finger.

This sequence belongs to the ZNHIT1 family. Homodimer. Component of the SWR1 chromatin-remodeling complex composed of at least ARP6/ESD1/SUF3, PIE1, SWC6, SWC2 and H2AZs (HTA8, HTA9, HTA11). Interacts directly with ARP6, PIE1 and SWC2. Interacts with FLX and SUF4, two component of the transcription activator complex FRI-C, and with ASHH2 and TAF14. In terms of tissue distribution, expressed in root, lateral root primordia, shoot apex, leaves, stems, inflorescences, flowers, axillary buds, developing siliques and premature seeds.

It localises to the nucleus speckle. It is found in the nucleus. Functionally, component of the SWR1 complex which mediates the ATP-dependent exchange of histone H2A for the H2A variant H2A.F/Z leading to transcriptional regulation of selected genes (e.g. FLC) by chromatin remodeling. Coodinates SWR1-C, FRI-C (FLC transcription activator complex), histone methyltransferase and general transcription factors. Represses flowering by positively regulating FLC and MAF4. Binds to the promoter region of FLC chromatin. The sequence is that of SWR1 complex subunit 6 (SWC6) from Arabidopsis thaliana (Mouse-ear cress).